The sequence spans 103 residues: BLOC-1-related complex subunit 7 (103 aa).

This sequence belongs to the BORCS7 family.

It localises to the lysosome membrane. As part of a BORC-like complex may play a role in lysosomes movement and localization at the cell periphery. Associated with the cytosolic face of lysosomes, this complex may couple lysosomes to microtubule plus-end-directed kinesin motor. This is BLOC-1-related complex subunit 7 from Danio rerio (Zebrafish).